The primary structure comprises 414 residues: Eukaryotic initiation factor 4A-3 (414 aa).

The short motif at 41 to 69 (ESFDDMGLQENLLRGIYAYGFEKPSAIQQ) is the Q motif element. The region spanning 72–242 (IVPFCKGLDV…RKFMNKPVRI (171 aa)) is the Helicase ATP-binding domain. Position 85-92 (85-92 (AQSGTGKT)) interacts with ATP. A DEAD box motif is present at residues 190 to 193 (DEAD). A Helicase C-terminal domain is found at 253 to 414 (GIKQFYVNVE…ELPANVADLL (162 aa)).

This sequence belongs to the DEAD box helicase family. eIF4A subfamily. In terms of assembly, eIF4F is a multi-subunit complex, the composition of which varies with external and internal environmental conditions. It is composed of at least EIF4A, EIF4E and EIF4G. Interacts with DRM2 (via UBA domains).

The protein localises to the cytoplasm. Its subcellular location is the nucleus. It carries out the reaction ATP + H2O = ADP + phosphate + H(+). In terms of biological role, ATP-dependent RNA helicase which is a subunit of the eIF4F complex involved in cap recognition and is required for mRNA binding to ribosome. In the current model of translation initiation, eIF4A unwinds RNA secondary structures in the 5'-UTR of mRNAs which is necessary to allow efficient binding of the small ribosomal subunit, and subsequent scanning for the initiator codon. The sequence is that of Eukaryotic initiation factor 4A-3 from Oryza sativa subsp. japonica (Rice).